The primary structure comprises 165 residues: S-ribosylhomocysteine lyase (165 aa).

Residues histidine 54, histidine 58, and cysteine 128 each coordinate Fe cation.

The protein belongs to the LuxS family. As to quaternary structure, homodimer. Fe cation serves as cofactor.

The enzyme catalyses S-(5-deoxy-D-ribos-5-yl)-L-homocysteine = (S)-4,5-dihydroxypentane-2,3-dione + L-homocysteine. In terms of biological role, involved in the synthesis of autoinducer 2 (AI-2) which is secreted by bacteria and is used to communicate both the cell density and the metabolic potential of the environment. The regulation of gene expression in response to changes in cell density is called quorum sensing. Catalyzes the transformation of S-ribosylhomocysteine (RHC) to homocysteine (HC) and 4,5-dihydroxy-2,3-pentadione (DPD). The polypeptide is S-ribosylhomocysteine lyase (Helicobacter hepaticus (strain ATCC 51449 / 3B1)).